The chain runs to 319 residues: MKRIGILTSGGDAPGMNAAVRAVARKAMHEGLEVYGINYGFAGLVAGDIFKMNESTVGDKIQRGGTMLYSARYPQFAQEEGQLRGVEQLNKFGIEALVVIGGDGSYHGALALTRHGFNTIGLPGTIDNDIPYTDFTIGFDTAVNTVVEAVDRLRDTAASHERTFVIEVMGREAGDIALWSGVAGGAEDVIIPEHDFDVKKIASKLQSSRERGQKHAVILLAEGVMHADQFAKELAAHGDFQLRSTVLGHIVRGGAPSARDRVLASQMGSYAVELLLQGKGALAVGIENNKITAHDVRTLFDAKHHAELSLYTLAEELTF.

Gly-11 lines the ATP pocket. ADP is bound at residue 21–25 (RAVAR). ATP-binding positions include 72 to 73 (RY) and 102 to 105 (GDGS). Asp-103 is a Mg(2+) binding site. Residue 125–127 (TID) coordinates substrate. The active-site Proton acceptor is Asp-127. Residue Arg-154 participates in ADP binding. Residues Arg-162 and 169-171 (MGR) contribute to the substrate site. Residues 185–187 (GAE) and Arg-211 contribute to the ADP site. Substrate contacts are provided by residues Glu-222, Arg-243, and 249-252 (HIVR).

The protein belongs to the phosphofructokinase type A (PFKA) family. ATP-dependent PFK group I subfamily. Prokaryotic clade 'B1' sub-subfamily. In terms of assembly, homotetramer. The cofactor is Mg(2+).

Its subcellular location is the cytoplasm. It carries out the reaction beta-D-fructose 6-phosphate + ATP = beta-D-fructose 1,6-bisphosphate + ADP + H(+). The protein operates within carbohydrate degradation; glycolysis; D-glyceraldehyde 3-phosphate and glycerone phosphate from D-glucose: step 3/4. Its activity is regulated as follows. Allosterically activated by ADP and other diphosphonucleosides, and allosterically inhibited by phosphoenolpyruvate. Functionally, catalyzes the phosphorylation of D-fructose 6-phosphate to fructose 1,6-bisphosphate by ATP, the first committing step of glycolysis. In Lacticaseibacillus casei (strain BL23) (Lactobacillus casei), this protein is ATP-dependent 6-phosphofructokinase.